The following is a 327-amino-acid chain: Interleukin-12 subunit beta (327 aa).

The first 22 residues, 1 to 22 (MHPQQLVVSWFSLVLLASPIVA), serve as a signal peptide directing secretion. An Ig-like C2-type domain is found at 23–106 (IWELEKNVYI…LSRSLLLLHK (84 aa)). Cysteines 50 and 90 form a disulfide. N-linked (GlcNAc...) asparagine glycosylation occurs at Asn223. In terms of domain architecture, Fibronectin type-III spans 238–327 (PPKNLQLKPL…WSEWASVSCS (90 aa)).

The protein belongs to the IL-12B family. Heterodimer with IL12A; disulfide-linked. The heterodimer is known as interleukin IL-12. Heterodimer with IL23A; disulfide-linked. The heterodimer is known as interleukin IL-23. Also secreted as a monomer. Interacts with NBR1; this interaction promotes IL-12 secretion.

Cytokine that can act as a growth factor for activated T and NK cells, enhance the lytic activity of NK/lymphokine-activated killer cells, and stimulate the production of IFN-gamma by resting PBMC. In terms of biological role, associates with IL23A to form the IL-23 interleukin, a heterodimeric cytokine which functions in innate and adaptive immunity. IL-23 may constitute with IL-17 an acute response to infection in peripheral tissues. IL-23 binds to a heterodimeric receptor complex composed of IL12RB1 and IL23R, activates the Jak-Stat signaling cascade, stimulates memory rather than naive T-cells and promotes production of pro-inflammatory cytokines. IL-23 induces autoimmune inflammation and thus may be responsible for autoimmune inflammatory diseases and may be important for tumorigenesis. In Bubalus bubalis (Domestic water buffalo), this protein is Interleukin-12 subunit beta (IL12B).